Here is a 1078-residue protein sequence, read N- to C-terminus: Zinc finger protein 827 (1078 aa).

Over residues 1 to 10 (MPRRKQEQPK) the composition is skewed to basic and acidic residues. The mediates direct interaction with RBBP4 stretch occupies residues 1-14 (MPRRKQEQPKRLPS). The tract at residues 1–76 (MPRRKQEQPK…PDTSLGSATP (76 aa)) is disordered. An RRK motif; mediates NuRD recruitment to telomeres motif is present at residues 3-5 (RRK). Composition is skewed to polar residues over residues 33 to 42 (YGNSSETPSE) and 62 to 76 (EQSTSPDTSLGSATP). Residues Lys175, Lys215, and Lys225 each participate in a glycyl lysine isopeptide (Lys-Gly) (interchain with G-Cter in SUMO2) cross-link. Positions 307-341 (SLLPDDPLPLPSSEKKPEKVTPPPPPPPPTAQPPQ) are disordered. The segment covering 326-338 (VTPPPPPPPPTAQ) has biased composition (pro residues). Residues Lys357 and Lys369 each participate in a glycyl lysine isopeptide (Lys-Gly) (interchain with G-Cter in SUMO2) cross-link. C2H2-type zinc fingers lie at residues 371 to 393 (FQCPICGLVIKRKSYWKRHMVIH), 399 to 421 (HQCPLCPFRCARKDNLKSHMKVH), and 430 to 452 (FQCQLCPFTSSRHFSLKLHMRCH). Residues Lys463, Lys472, Lys520, Lys546, Lys577, Lys584, and Lys594 each participate in a glycyl lysine isopeptide (Lys-Gly) (interchain with G-Cter in SUMO2) cross-link. The disordered stretch occupies residues 466–490 (IPDPDVKGSPHLSDSGCLGQQREGG). The segment at 594 to 640 (KEEPKEEESLSMPLPRSSYVFSPEPEVSTPSVSEDPLTPQEGKGSVL) is disordered. Low complexity predominate over residues 613–627 (VFSPEPEVSTPSVSE). Glycyl lysine isopeptide (Lys-Gly) (interchain with G-Cter in SUMO2) cross-links involve residues Lys636 and Lys655. A Glycyl lysine isopeptide (Lys-Gly) (interchain with G-Cter in SUMO1); alternate cross-link involves residue Lys670. Lys670 is covalently cross-linked (Glycyl lysine isopeptide (Lys-Gly) (interchain with G-Cter in SUMO2); alternate). Glycyl lysine isopeptide (Lys-Gly) (interchain with G-Cter in SUMO2) cross-links involve residues Lys701, Lys707, Lys739, Lys775, and Lys795. 2 C2H2-type zinc fingers span residues 814-836 (FPCDVCGKVFGRQQTLSRHLSLH) and 842-864 (YKCHLCPYAAKCRANLNQHLTVH). Glycyl lysine isopeptide (Lys-Gly) (interchain with G-Cter in SUMO2) cross-links involve residues Lys867 and Lys888. C2H2-type zinc fingers lie at residues 894–916 (YSCHVCGFETELNVQFVSHMSLH) and 926–949 (ICCTACDFVTMEEAEIKTHIGTKH). Residues 945–957 (IGTKHTGDDRKTP) are compositionally biased toward basic and acidic residues. Positions 945–990 (IGTKHTGDDRKTPSESNSPSSSSLSTLSDSANGKDDSDSSQKNKGG) are disordered. A Glycyl lysine isopeptide (Lys-Gly) (interchain with G-Cter in SUMO2) cross-link involves residue Lys955. Low complexity predominate over residues 958–974 (SESNSPSSSSLSTLSDS). The segment covering 976–985 (NGKDDSDSSQ) has biased composition (basic and acidic residues). A Glycyl lysine isopeptide (Lys-Gly) (interchain with G-Cter in SUMO2) cross-link involves residue Lys1011. C2H2-type zinc fingers lie at residues 1016–1038 (FECVFCNFVCKTKNMFERHLQIH) and 1044–1066 (FECDVCHKFMKTPEQLLEHKKCH).

This sequence belongs to the krueppel C2H2-type zinc-finger protein family. In terms of assembly, part of a transcription inhibitory ribonucleoprotein complex composed at least of the circular RNA circZNF827, HNRNPK and HNRNPL. Interacts with the nucleosome remodeling and histone deacetylase/NuRD complex. Interacts with RBBP4; the interaction is direct and recruits RBBP4, a component of the NuRD complex, to telomeres.

It is found in the nucleus. It localises to the chromosome. Its subcellular location is the telomere. In terms of biological role, as part of a ribonucleoprotein complex composed at least of HNRNPK, HNRNPL and the circular RNA circZNF827 that nucleates the complex on chromatin, may negatively regulate the transcription of genes involved in neuronal differentiation. Could also recruit the nucleosome remodeling and histone deacetylase/NuRD complex to telomeric regions of chromosomes to regulate chromatin remodeling as part of telomere maintenance. This Mus musculus (Mouse) protein is Zinc finger protein 827 (Znf827).